The primary structure comprises 110 residues: Large ribosomal subunit protein uL22 (110 aa).

Belongs to the universal ribosomal protein uL22 family. As to quaternary structure, part of the 50S ribosomal subunit.

Functionally, this protein binds specifically to 23S rRNA; its binding is stimulated by other ribosomal proteins, e.g. L4, L17, and L20. It is important during the early stages of 50S assembly. It makes multiple contacts with different domains of the 23S rRNA in the assembled 50S subunit and ribosome. The globular domain of the protein is located near the polypeptide exit tunnel on the outside of the subunit, while an extended beta-hairpin is found that lines the wall of the exit tunnel in the center of the 70S ribosome. In Maridesulfovibrio salexigens (strain ATCC 14822 / DSM 2638 / NCIMB 8403 / VKM B-1763) (Desulfovibrio salexigens), this protein is Large ribosomal subunit protein uL22.